The primary structure comprises 468 residues: Probable Xaa-Pro aminopeptidase pepP (468 aa).

Mn(2+)-binding residues include D264, D275, E398, and E438.

Belongs to the peptidase M24B family. Requires Mn(2+) as cofactor.

It carries out the reaction Release of any N-terminal amino acid, including proline, that is linked to proline, even from a dipeptide or tripeptide.. In terms of biological role, catalyzes the removal of a penultimate prolyl residue from the N-termini of peptides. The protein is Probable Xaa-Pro aminopeptidase pepP (pepP) of Talaromyces stipitatus (strain ATCC 10500 / CBS 375.48 / QM 6759 / NRRL 1006) (Penicillium stipitatum).